Reading from the N-terminus, the 548-residue chain is Probable 2,3-bisphosphoglycerate-independent phosphoglycerate mutase (548 aa).

Positions 20 and 73 each coordinate Mn(2+). Residue serine 73 is the Phosphoserine intermediate of the active site. Substrate contacts are provided by residues histidine 134, 164-165, arginine 200, arginine 207, 279-282, and lysine 354; these read RD and RGDR. Positions 422, 426, 463, 464, and 493 each coordinate Mn(2+).

The protein belongs to the BPG-independent phosphoglycerate mutase family. In terms of assembly, monomer. Requires Mn(2+) as cofactor.

The catalysed reaction is (2R)-2-phosphoglycerate = (2R)-3-phosphoglycerate. Its pathway is carbohydrate degradation; glycolysis; pyruvate from D-glyceraldehyde 3-phosphate: step 3/5. Catalyzes the interconversion of 2-phosphoglycerate and 3-phosphoglycerate. This is Probable 2,3-bisphosphoglycerate-independent phosphoglycerate mutase (gpmI) from Leptospira interrogans serogroup Icterohaemorrhagiae serovar copenhageni (strain Fiocruz L1-130).